Here is a 138-residue protein sequence, read N- to C-terminus: Basic phospholipase A2 vurtoxin (138 aa).

Positions 1-16 are cleaved as a signal peptide; the sequence is MRTLWIVAVCLIGVEG. 7 disulfide bridges follow: Cys42-Cys131, Cys44-Cys60, Cys59-Cys111, Cys65-Cys138, Cys66-Cys104, Cys73-Cys97, and Cys91-Cys102. The Ca(2+) site is built by Tyr43, Gly45, and Gly47. His63 is a catalytic residue. Position 64 (Asp64) interacts with Ca(2+). The active site involves Asp105.

It depends on Ca(2+) as a cofactor. Expressed by the venom gland.

It localises to the secreted. The catalysed reaction is a 1,2-diacyl-sn-glycero-3-phosphocholine + H2O = a 1-acyl-sn-glycero-3-phosphocholine + a fatty acid + H(+). Its function is as follows. Snake venom phospholipase A2 that may have a strong anticoagulant activity. Is able to suppress the acetylcholine (ACh)-evoked current mediated by alpha-7 (CHRNA7)-similar nAChRs in L.stagnalis neurons (IC(50)=10.5 uM) and to compete with alpha-bungarotoxin for binding to muscle- and alpha-7 neuronal nAChR types, as well as to AChBPs. In inhibition of alpha-bungarotoxin binding, this toxin is mostly active against T.californica nAChR (IC(50)=0.26 uM), it is moderately active against human alpha-7 nAChR (IC(50)=14 uM), and is not active against L.stagnalis and A.californica AChBP (IC(50)&gt;30 uM). This Vipera renardi (Steppe viper) protein is Basic phospholipase A2 vurtoxin.